Reading from the N-terminus, the 1068-residue chain is Huntingtin-interacting protein 1-related protein (1068 aa).

M1 carries the N-acetylmethionine modification. An ENTH domain is found at E23 to P151. Residues G346–D644 are a coiled coil. The disordered stretch occupies residues E582 to Q610. Positions S592–Q608 are enriched in basic and acidic residues. An I/LWEQ domain is found at S771–A1012. The segment at R867 to K924 is important for actin binding. A disordered region spans residues L1011–Y1068.

The protein belongs to the SLA2 family. As to quaternary structure, homodimer. Interacts with actin; homodimerization promotes actin binding. Interacts with CLTB. Interacts with HIP1. Interacts (via ENTH and I/LWEQ domains) with BCL2L10. In terms of tissue distribution, widely expressed. Expressed at lower levels in skeletal muscle and heart. The level of expression does not change appreciably during development.

It is found in the cytoplasm. The protein resides in the perinuclear region. The protein localises to the endomembrane system. Its subcellular location is the cytoplasmic vesicle. It localises to the clathrin-coated vesicle membrane. In terms of biological role, component of clathrin-coated pits and vesicles, that may link the endocytic machinery to the actin cytoskeleton. Binds 3-phosphoinositides (via ENTH domain). May act through the ENTH domain to promote cell survival by stabilizing receptor tyrosine kinases following ligand-induced endocytosis. In Mus musculus (Mouse), this protein is Huntingtin-interacting protein 1-related protein (Hip1r).